We begin with the raw amino-acid sequence, 299 residues long: Putative arsenical pump-driving ATPase 2 (299 aa).

Residue 8 to 15 (GKGGVGKT) participates in ATP binding.

The protein belongs to the arsA ATPase family.

The enzyme catalyses arsenite(in) + ATP + H2O = arsenite(out) + ADP + phosphate + H(+). Anion-transporting ATPase. Catalyzes the extrusion of arsenite. This chain is Putative arsenical pump-driving ATPase 2 (arsA2), found in Aquifex aeolicus (strain VF5).